Consider the following 469-residue polypeptide: L-seryl-tRNA(Sec) selenium transferase (469 aa).

Residue Lys295 is modified to N6-(pyridoxal phosphate)lysine.

This sequence belongs to the SelA family. The cofactor is pyridoxal 5'-phosphate.

It localises to the cytoplasm. The catalysed reaction is L-seryl-tRNA(Sec) + selenophosphate + H(+) = L-selenocysteinyl-tRNA(Sec) + phosphate. The protein operates within aminoacyl-tRNA biosynthesis; selenocysteinyl-tRNA(Sec) biosynthesis; selenocysteinyl-tRNA(Sec) from L-seryl-tRNA(Sec) (bacterial route): step 1/1. Converts seryl-tRNA(Sec) to selenocysteinyl-tRNA(Sec) required for selenoprotein biosynthesis. The sequence is that of L-seryl-tRNA(Sec) selenium transferase from Methylocella silvestris (strain DSM 15510 / CIP 108128 / LMG 27833 / NCIMB 13906 / BL2).